The following is a 198-amino-acid chain: Cytokinin riboside 5'-monophosphate phosphoribohydrolase (198 aa).

Substrate is bound by residues glutamate 91, 109–110 (RK), 126–132 (GVGTAEE), and threonine 138.

Belongs to the LOG family.

The enzyme catalyses N(6)-(dimethylallyl)adenosine 5'-phosphate + H2O = N(6)-dimethylallyladenine + D-ribose 5-phosphate. It carries out the reaction 9-ribosyl-trans-zeatin 5'-phosphate + H2O = trans-zeatin + D-ribose 5-phosphate. Its function is as follows. Catalyzes the hydrolytic removal of ribose 5'-monophosphate from nitrogen N6-modified adenosines, the final step of bioactive cytokinin synthesis. This Rhodococcoides fascians (Rhodococcus fascians) protein is Cytokinin riboside 5'-monophosphate phosphoribohydrolase (fas6).